Consider the following 561-residue polypeptide: Arf-GAP domain and FG repeat-containing protein 1 (561 aa).

The Arf-GAP domain occupies 11–135 (EKHLKMLRDM…WYVPPEQAKV (125 aa)). Residues 29-52 (CFDCDQRGPTYVNMTVGSFVCTSC) form a C4-type zinc finger. The residue at position 167 (Ser167) is a Phosphoserine. A disordered region spans residues 171-193 (LHLNKGTPTQSPVVGRSQGQQQE). Over residues 176–191 (GTPTQSPVVGRSQGQQ) the composition is skewed to polar residues. Thr177 carries the phosphothreonine modification. Ser181 and Ser362 each carry phosphoserine. Ser367 carries O-linked (GlcNAc) serine glycosylation. The interval 409-451 (PVGASPQTQPASSGPAPFGATPSTNPFVAATGPSAASSTNPFQ) is disordered. Positions 442-451 (SAASSTNPFQ) are enriched in polar residues.

In terms of assembly, interacts with EPS15R and EPS15. Interacts with FCHO1. O-glycosylated.

The protein resides in the nucleus. It localises to the cytoplasmic vesicle. In terms of biological role, required for vesicle docking or fusion during acrosome biogenesis. May play a role in RNA trafficking or localization. This is Arf-GAP domain and FG repeat-containing protein 1 (Agfg1) from Rattus norvegicus (Rat).